Here is a 129-residue protein sequence, read N- to C-terminus: Dormancy-associated protein 2 (129 aa).

The N-terminal stretch at 1–25 is a signal peptide; sequence MDSRKAMLILGLLAMVLLISSEVSA. The disordered stretch occupies residues 110 to 129; sequence GGYHGGGGHGGHGGASNNGN.

This sequence belongs to the DRM1/ARP family. As to expression, expressed in axilary buds. Detected in growing stems, leaflets and floral organs, but not in roots.

The chain is Dormancy-associated protein 2 from Pisum sativum (Garden pea).